The primary structure comprises 315 residues: Spermidine synthase 1 (315 aa).

The PABS domain maps to 25-262; the sequence is PGWFSEISPL…GMIGFMLCST (238 aa). Glutamine 56 contributes to the S-adenosyl 3-(methylsulfanyl)propylamine binding site. A putrescine-binding site is contributed by tyrosine 86. S-adenosyl 3-(methylsulfanyl)propylamine-binding positions include glutamine 87, aspartate 111, glutamate 131, 162 to 163, and aspartate 181; that span reads DG. Residue aspartate 181 is the Proton acceptor of the active site. Putrescine contacts are provided by residues 181 to 184 and tyrosine 250; that span reads DSSD.

The protein belongs to the spermidine/spermine synthase family.

It carries out the reaction S-adenosyl 3-(methylsulfanyl)propylamine + putrescine = S-methyl-5'-thioadenosine + spermidine + H(+). It participates in amine and polyamine biosynthesis; spermidine biosynthesis; spermidine from putrescine: step 1/1. The protein is Spermidine synthase 1 of Hyoscyamus niger (Black henbane).